The following is a 371-amino-acid chain: 4-hydroxy-3-methylbut-2-en-1-yl diphosphate synthase (flavodoxin) (371 aa).

[4Fe-4S] cluster-binding residues include Cys272, Cys275, Cys307, and Glu314.

It belongs to the IspG family. It depends on [4Fe-4S] cluster as a cofactor.

The enzyme catalyses (2E)-4-hydroxy-3-methylbut-2-enyl diphosphate + oxidized [flavodoxin] + H2O + 2 H(+) = 2-C-methyl-D-erythritol 2,4-cyclic diphosphate + reduced [flavodoxin]. It functions in the pathway isoprenoid biosynthesis; isopentenyl diphosphate biosynthesis via DXP pathway; isopentenyl diphosphate from 1-deoxy-D-xylulose 5-phosphate: step 5/6. In terms of biological role, converts 2C-methyl-D-erythritol 2,4-cyclodiphosphate (ME-2,4cPP) into 1-hydroxy-2-methyl-2-(E)-butenyl 4-diphosphate. This is 4-hydroxy-3-methylbut-2-en-1-yl diphosphate synthase (flavodoxin) from Pseudomonas paraeruginosa (strain DSM 24068 / PA7) (Pseudomonas aeruginosa (strain PA7)).